A 57-amino-acid polypeptide reads, in one-letter code: Potassium channel toxin alpha-KTx 8.7 (57 aa).

A signal peptide spans 1-28 (MSRLYAIILIALVFNVIMTIMPDMKVEA). 3 disulfides stabilise this stretch: cysteine 31–cysteine 47, cysteine 34–cysteine 52, and cysteine 38–cysteine 54.

As to expression, expressed by the venom gland.

It is found in the secreted. In terms of biological role, inhibits voltage-gated potassium channel rKv1.1/KCNA1 at nanomolar ranges (IC(50)=8.5 nM). This is Potassium channel toxin alpha-KTx 8.7 from Mesobuthus eupeus (Lesser Asian scorpion).